Reading from the N-terminus, the 787-residue chain is LPS-assembly protein LptD (787 aa).

Residues 1 to 24 (MKKSFPTLLATLVWSALYSQHALA) form the signal peptide.

It belongs to the LptD family. Component of the lipopolysaccharide transport and assembly complex. Interacts with LptE and LptA.

Its subcellular location is the cell outer membrane. In terms of biological role, together with LptE, is involved in the assembly of lipopolysaccharide (LPS) at the surface of the outer membrane. In Pectobacterium atrosepticum (strain SCRI 1043 / ATCC BAA-672) (Erwinia carotovora subsp. atroseptica), this protein is LPS-assembly protein LptD.